A 383-amino-acid chain; its full sequence is Putative glutamate--cysteine ligase 2 (383 aa).

The protein belongs to the glutamate--cysteine ligase type 2 family. YbdK subfamily.

It carries out the reaction L-cysteine + L-glutamate + ATP = gamma-L-glutamyl-L-cysteine + ADP + phosphate + H(+). ATP-dependent carboxylate-amine ligase which exhibits weak glutamate--cysteine ligase activity. In Clavibacter sepedonicus (Clavibacter michiganensis subsp. sepedonicus), this protein is Putative glutamate--cysteine ligase 2.